Consider the following 342-residue polypeptide: Platelet-activating factor receptor (342 aa).

Topologically, residues 1–16 (MEPHDSSHMDSEFRYT) are extracellular. A helical membrane pass occupies residues 17–38 (LFPIVYSIIFVLGVIANGYVLW). Residues 39–54 (VFARLYPCKKFNEIKI) lie on the Cytoplasmic side of the membrane. The chain crosses the membrane as a helical span at residues 55-74 (FMVNLTMADMLFLITLPLWI). The Extracellular portion of the chain corresponds to 75-91 (VYYQNQGNWILPKFLCN). An intrachain disulfide couples C90 to C173. A helical transmembrane segment spans residues 92-113 (VAGCLFFINTYCSVAFLGVITY). Residues 114–133 (NRFQAVTRPIKTAQANTRKR) lie on the Cytoplasmic side of the membrane. A helical membrane pass occupies residues 134–155 (GISLSLVIWVAIVGAASYFLIL). The Extracellular portion of the chain corresponds to 156–184 (DSTNTVPDSAGSGNVTRCFEHYEKGSVPV). N169 carries an N-linked (GlcNAc...) asparagine glycan. Residues 185-205 (LIIHIFIVFSFFLVFLIILFC) form a helical membrane-spanning segment. The Cytoplasmic portion of the chain corresponds to 206 to 233 (NLVIIRTLLMQPVQQQRNAEVKRRALWM). The helical transmembrane segment at 234 to 254 (VCTVLAVFIICFVPHHVVQLP) threads the bilayer. Residues 255–276 (WTLAELGFQDSKFHQAINDAHQ) are Extracellular-facing. A helical transmembrane segment spans residues 277-296 (VTLCLLSTNCVLDPVIYCFL). Residues 297-342 (TKKFRKHLTEKFYSMRSSRKCSRATTDTVTEVVVPFNQIPGNSLKN) are Cytoplasmic-facing.

It belongs to the G-protein coupled receptor 1 family. Interacts with ARRB1. Expressed in the placenta, lung, left and right heart ventricles, heart atrium, leukocytes and differentiated HL-60 granulocytes.

Its subcellular location is the cell membrane. Receptor for platelet activating factor, a chemotactic phospholipid mediator that possesses potent inflammatory, smooth-muscle contractile and hypotensive activity. Seems to mediate its action via a G protein that activates a phosphatidylinositol-calcium second messenger system. The polypeptide is Platelet-activating factor receptor (PTAFR) (Homo sapiens (Human)).